The chain runs to 798 residues: Penicillin-binding protein 1A (798 aa).

Residues 1 to 9 lie on the Cytoplasmic side of the membrane; that stretch reads MIKKIVTTC. Residues 10-30 traverse the membrane as a helical; Signal-anchor for type II membrane protein segment; that stretch reads FGLVLGLCVFGVGLVAIAILV. Residues 31–798 are Periplasmic-facing; the sequence is TYPKLPSLDS…SKQPQLDSLF (768 aa). A transglycosylase region spans residues 50 to 218; sequence LTIYSADGEV…SAYNPIVNPE (169 aa). Residue Glu-88 is the Proton donor; for transglycosylase activity of the active site. Positions 414-700 are transpeptidase; sequence VVVQEPLLQA…GTIAVPVWVD (287 aa). Residue Ser-461 is the Acyl-ester intermediate; for transpeptidase activity of the active site. Residues 751–798 form a disordered region; sequence SRRIREDKEAGAEDVERGAADEVRQEVQETPVLPSNTGSKQPQLDSLF. Residues 753-777 show a composition bias toward basic and acidic residues; sequence RIREDKEAGAEDVERGAADEVRQEV. The segment covering 783–798 has biased composition (polar residues); it reads LPSNTGSKQPQLDSLF.

The protein in the N-terminal section; belongs to the glycosyltransferase 51 family. This sequence in the C-terminal section; belongs to the transpeptidase family.

It localises to the cell inner membrane. It catalyses the reaction [GlcNAc-(1-&gt;4)-Mur2Ac(oyl-L-Ala-gamma-D-Glu-L-Lys-D-Ala-D-Ala)](n)-di-trans,octa-cis-undecaprenyl diphosphate + beta-D-GlcNAc-(1-&gt;4)-Mur2Ac(oyl-L-Ala-gamma-D-Glu-L-Lys-D-Ala-D-Ala)-di-trans,octa-cis-undecaprenyl diphosphate = [GlcNAc-(1-&gt;4)-Mur2Ac(oyl-L-Ala-gamma-D-Glu-L-Lys-D-Ala-D-Ala)](n+1)-di-trans,octa-cis-undecaprenyl diphosphate + di-trans,octa-cis-undecaprenyl diphosphate + H(+). It carries out the reaction Preferential cleavage: (Ac)2-L-Lys-D-Ala-|-D-Ala. Also transpeptidation of peptidyl-alanyl moieties that are N-acyl substituents of D-alanine.. It participates in cell wall biogenesis; peptidoglycan biosynthesis. Cell wall formation. Synthesis of cross-linked peptidoglycan from the lipid intermediates. The enzyme has a penicillin-insensitive transglycosylase N-terminal domain (formation of linear glycan strands) and a penicillin-sensitive transpeptidase C-terminal domain (cross-linking of the peptide subunits). The protein is Penicillin-binding protein 1A (mrcA) of Neisseria cinerea.